Reading from the N-terminus, the 215-residue chain is MGKGDPKKPRGKMSSYAFFVQTCREEHKKKHPDASVNFSEFSKKCSERWKTMSAKEKGKFEDMAKADKARYEREMKTYIPPKGETKKKFKDPNAPKRPPSAFFLFCSEYRPKIKGEHPGLSIGDVAKKLGEMWNNTAADDKQPYEKKAAKLKEKYEKDIAAYRAKGKPDAAKKGVVKAEKSKKKKEEEEDEEDEEDEEEEEDEEDEDEEEDDDDE.

A heparin-binding site is contributed by 1 to 10 (MGKGDPKKPR). A sufficient for interaction with HAVCR2 region spans residues 1–97 (MGKGDPKKPR…KFKDPNAPKR (97 aa)). N6-acetyllysine occurs at positions 3, 7, 8, and 12. The segment at 3–15 (KGDPKKPRGKMSS) is LPS binding (delipidated). A DNA-binding region (HMG box 1) is located at residues 9 to 79 (PRGKMSSYAF…RYEREMKTYI (71 aa)). At cysteine 23 the chain carries Cysteine sulfonic acid (-SO3H); alternate. A disulfide bridge connects residues cysteine 23 and cysteine 45. The tract at residues 27–43 (HKKKHPDASVNFSEFSK) is NLS 1. Residues 27–43 (HKKKHPDASVNFSEFSK) carry the Nuclear localization signal (NLS) 1 motif. An N6-acetyllysine mark is found at lysine 28, lysine 29, and lysine 30. Lysine 28 is covalently cross-linked (Isoglutamyl lysine isopeptide (Lys-Gln) (interchain with Q-?)). Serine 35 bears the Phosphoserine mark. At lysine 43 the chain carries N6-acetyllysine. Residues lysine 43 and lysine 44 each participate in an isoglutamyl lysine isopeptide (Lys-Gln) (interchain with Q-?) cross-link. Cysteine 45 is subject to Cysteine sulfonic acid (-SO3H); alternate. Lysine 68 is covalently cross-linked (Isoglutamyl lysine isopeptide (Lys-Gln) (interchain with Q-?)). The tract at residues 76–95 (KTYIPPKGETKKKFKDPNAP) is disordered. Residues 80–96 (PPKGETKKKFKDPNAPK) form an LPS binding (Lipid A) region. Residues 83-94 (GETKKKFKDPNA) show a composition bias toward basic and acidic residues. The interval 89–108 (FKDPNAPKRPPSAFFLFCSE) is cytokine-stimulating activity. The residue at position 90 (lysine 90) is an N6-acetyllysine. Positions 95-163 (PKRPPSAFFL…KYEKDIAAYR (69 aa)) form a DNA-binding region, HMG box 2. Position 100 is a phosphoserine (serine 100). Residue cysteine 106 is modified to Cysteine sulfonic acid (-SO3H). N6-acetyllysine is present on residues lysine 127, lysine 128, lysine 141, lysine 172, lysine 173, lysine 177, and lysine 180. The binding to AGER/RAGE stretch occupies residues 150-183 (KLKEKYEKDIAAYRAKGKPDAAKKGVVKAEKSKK). Residues 161-179 (AYRAKGKPDAAKKGVVKAE) show a composition bias toward basic and acidic residues. The interval 161 to 215 (AYRAKGKPDAAKKGVVKAEKSKKKKEEEEDEEDEEDEEEEEDEEDEDEEEDDDDE) is disordered. Residues 178-184 (AEKSKKK) are NLS 2. The short motif at 178 to 184 (AEKSKKK) is the Nuclear localization signal (NLS) 2 element. Lysine 180 participates in a covalent cross-link: Isoglutamyl lysine isopeptide (Lys-Gln) (interchain with Q-?). Serine 181 is modified (ADP-ribosylserine). N6-acetyllysine is present on residues lysine 182, lysine 183, lysine 184, and lysine 185. Isoglutamyl lysine isopeptide (Lys-Gln) (interchain with Q-?) cross-links involve residues lysine 182, lysine 183, and lysine 184. Over residues 187–215 (EEEDEEDEEDEEEEEDEEDEDEEEDDDDE) the composition is skewed to acidic residues.

Belongs to the HMGB family. Interacts (fully reduced HMGB1) with CXCL12; probably in a 1:2 ratio involving two molecules of CXCL12, each interacting with one HMG box of HMGB1; inhibited by glycyrrhizin. Associates with the TLR4:LY96 receptor complex. Component of the RAG complex composed of core components RAG1 and RAG2, and associated component HMGB1 or HMGB2. Interacts (in cytoplasm upon starvation) with BECN1; inhibits the interaction of BECN1 and BCL2 leading to promotion of autophagy. Interacts with KPNA1; involved in nuclear import. Interacts with SREBF1, TLR2, TLR4, TLR9, PTPRZ1, APEX1, FEN1, POLB, TERT. Interacts with IL1B, AGER, MSH2, XPA, XPC, HNF1A, TP53. Interacts with CD24; the probable CD24:SIGLEC10 complex is proposed to inhibit HGMB1-mediated tissue damage immune response. Interacts with THBD; prevents HGMB1 interaction with ACER/RAGE and inhibits HGMB1 pro-inflammatory activity. Interacts with HAVCR2; impairs HMGB1 binding to B-DNA and likely HMGB1-mediated innate immune response. Interacts with XPO1; mediating nuclear export. Interacts with receptor RAGE/AGER. Phosphorylated at serine residues. Phosphorylation in both NLS regions is required for cytoplasmic translocation followed by secretion. In terms of processing, acetylated on multiple sites upon stimulation with LPS. Acetylation on lysine residues in the nuclear localization signals (NLS 1 and NLS 2) leads to cytoplasmic localization and subsequent secretion. Acetylation on Lys-3 results in preferential binding to DNA ends and impairs DNA bending activity. Post-translationally, reduction/oxidation of cysteine residues Cys-23, Cys-45 and Cys-106 and a possible intramolecular disulfide bond involving Cys-23 and Cys-45 give rise to different redox forms with specific functional activities in various cellular compartments: 1- fully reduced HMGB1 (HMGB1C23hC45hC106h), 2- disulfide HMGB1 (HMGB1C23-C45C106h) and 3- sulfonyl HMGB1 (HMGB1C23soC45soC106so). Poly-ADP-ribosylated by PARP1 when secreted following stimulation with LPS. In terms of processing, in vitro cleavage by CASP1 is liberating a HMG box 1-containing peptide which may mediate immunogenic activity; the peptide antagonizes apoptosis-induced immune tolerance. Can be proteolytically cleaved by a thrombin:thrombomodulin complex; reduces binding to heparin and pro-inflammatory activities. Post-translationally, forms covalent cross-links mediated by transglutaminase TGM2, between a glutamine and the epsilon-amino group of a lysine residue, forming homopolymers and heteropolymers.

The protein resides in the nucleus. Its subcellular location is the chromosome. The protein localises to the cytoplasm. It is found in the secreted. It localises to the cell membrane. The protein resides in the endosome. Its subcellular location is the endoplasmic reticulum-Golgi intermediate compartment. Its function is as follows. Multifunctional redox sensitive protein with various roles in different cellular compartments. In the nucleus is one of the major chromatin-associated non-histone proteins and acts as a DNA chaperone involved in replication, transcription, chromatin remodeling, V(D)J recombination, DNA repair and genome stability. Proposed to be an universal biosensor for nucleic acids. Promotes host inflammatory response to sterile and infectious signals and is involved in the coordination and integration of innate and adaptive immune responses. In the cytoplasm functions as a sensor and/or chaperone for immunogenic nucleic acids implicating the activation of TLR9-mediated immune responses, and mediates autophagy. Acts as a danger-associated molecular pattern (DAMP) molecule that amplifies immune responses during tissue injury. Released to the extracellular environment can bind DNA, nucleosomes, IL-1 beta, CXCL12, AGER isoform 2/sRAGE, lipopolysaccharide (LPS) and lipoteichoic acid (LTA), and activates cells through engagement of multiple surface receptors. In the extracellular compartment fully reduced HMGB1 (released by necrosis) acts as a chemokine, disulfide HMGB1 (actively secreted) as a cytokine, and sulfonyl HMGB1 (released from apoptotic cells) promotes immunological tolerance. Has proangiogenic activity. May be involved in platelet activation. Binds to phosphatidylserine and phosphatidylethanolamide. Bound to RAGE mediates signaling for neuronal outgrowth. May play a role in accumulation of expanded polyglutamine (polyQ) proteins. Functionally, nuclear functions are attributed to fully reduced HGMB1. Associates with chromatin and binds DNA with a preference to non-canonical DNA structures such as single-stranded DNA, DNA-containing cruciforms or bent structures, supercoiled DNA and ZDNA. Can bent DNA and enhance DNA flexibility by looping thus providing a mechanism to promote activities on various gene promoters by enhancing transcription factor binding and/or bringing distant regulatory sequences into close proximity. May be involved in nucleotide excision repair (NER), mismatch repair (MMR) and base excision repair (BER) pathways, and double strand break repair such as non-homologous end joining (NHEJ). Involved in V(D)J recombination by acting as a cofactor of the RAG complex: acts by stimulating cleavage and RAG protein binding at the 23 bp spacer of conserved recombination signal sequences (RSS). In vitro can displace histone H1 from highly bent DNA. Can restructure the canonical nucleosome leading to relaxation of structural constraints for transcription factor-binding. Enhances binding of sterol regulatory element-binding proteins (SREBPs) such as SREBF1 to their cognate DNA sequences and increases their transcriptional activities. Facilitates binding of TP53 to DNA. May be involved in mitochondrial quality control and autophagy in a transcription-dependent fashion implicating HSPB1. Can modulate the activity of the telomerase complex and may be involved in telomere maintenance. In the cytoplasm proposed to dissociate the BECN1:BCL2 complex via competitive interaction with BECN1 leading to autophagy activation. Can protect BECN1 and ATG5 from calpain-mediated cleavage and thus proposed to control their proautophagic and proapoptotic functions and to regulate the extent and severity of inflammation-associated cellular injury. In myeloid cells has a protective role against endotoxemia and bacterial infection by promoting autophagy. Involved in endosomal translocation and activation of TLR9 in response to CpG-DNA in macrophages. In terms of biological role, in the extracellular compartment (following either active secretion or passive release) involved in regulation of the inflammatory response. Fully reduced HGMB1 (which subsequently gets oxidized after release) in association with CXCL12 mediates the recruitment of inflammatory cells during the initial phase of tissue injury; the CXCL12:HMGB1 complex triggers CXCR4 homodimerization. Induces the migration of monocyte-derived immature dendritic cells and seems to regulate adhesive and migratory functions of neutrophils implicating AGER/RAGE and ITGAM. Can bind to various types of DNA and RNA including microbial unmethylated CpG-DNA to enhance the innate immune response to nucleic acids. Proposed to act in promiscuous DNA/RNA sensing which cooperates with subsequent discriminative sensing by specific pattern recognition receptors. Promotes extracellular DNA-induced AIM2 inflammasome activation implicating AGER/RAGE. Disulfide HMGB1 binds to transmembrane receptors, such as AGER/RAGE, TLR2, TLR4 and probably TREM1, thus activating their signal transduction pathways. Mediates the release of cytokines/chemokines such as TNF, IL-1, IL-6, IL-8, CCL2, CCL3, CCL4 and CXCL10. Promotes secretion of interferon-gamma by macrophage-stimulated natural killer (NK) cells in concert with other cytokines like IL-2 or IL-12. TLR4 is proposed to be the primary receptor promoting macrophage activation and signaling through TLR4 seems to implicate LY96/MD-2. In bacterial LPS- or LTA-mediated inflammatory responses binds to the endotoxins and transfers them to CD14 for signaling to the respective TLR4:LY96 and TLR2 complexes. Contributes to tumor proliferation by association with ACER/RAGE. Can bind to IL1-beta and signals through the IL1R1:IL1RAP receptor complex. Binding to class A CpG activates cytokine production in plasmacytoid dendritic cells implicating TLR9, MYD88 and AGER/RAGE and can activate autoreactive B cells. Via HMGB1-containing chromatin immune complexes may also promote B cell responses to endogenous TLR9 ligands through a B-cell receptor (BCR)-dependent and ACER/RAGE-independent mechanism. Inhibits phagocytosis of apoptotic cells by macrophages; the function is dependent on poly-ADP-ribosylation and involves binding to phosphatidylserine on the cell surface of apoptotic cells. In adaptive immunity may be involved in enhancing immunity through activation of effector T-cells and suppression of regulatory T (TReg) cells. In contrast, without implicating effector or regulatory T-cells, required for tumor infiltration and activation of T-cells expressing the lymphotoxin LTA:LTB heterotrimer thus promoting tumor malignant progression. Also reported to limit proliferation of T-cells. Released HMGB1:nucleosome complexes formed during apoptosis can signal through TLR2 to induce cytokine production. Involved in induction of immunological tolerance by apoptotic cells; its pro-inflammatory activities when released by apoptotic cells are neutralized by reactive oxygen species (ROS)-dependent oxidation specifically on Cys-106. During macrophage activation by activated lymphocyte-derived self apoptotic DNA (ALD-DNA) promotes recruitment of ALD-DNA to endosomes. The sequence is that of High mobility group protein B1 (HMGB1) from Canis lupus familiaris (Dog).